Consider the following 210-residue polypeptide: MYALVTLAWWDFRTVRPRIGAMPIDFLQPAEIVAPQLLGCTLTHGGVGIRITEVEAYLDSTDEAAHTYRGKTPRNAAMFGPGGHMYVYISYGIHRAGNIVCGPEGTGQGVLLRAGEVVSGESIAQNRRGERIPHARLAQGPGNFGQALGLEVSDNHASVFGPSFLISDGVETPEIVRGPRIGISKNTEALLRFWIPNDPTVSGRRGYPKE.

The protein belongs to the DNA glycosylase MPG family.

This chain is Putative 3-methyladenine DNA glycosylase, found in Corynebacterium glutamicum (strain R).